The primary structure comprises 327 residues: Elongation factor P--(R)-beta-lysine ligase (327 aa).

Ser78–Glu80 lines the substrate pocket. ATP contacts are provided by residues Arg102–Gln104 and Asn111. Tyr120 serves as a coordination point for substrate. Glu246 to Leu247 contributes to the ATP binding site. Position 253 (Glu253) interacts with substrate. Gly302 serves as a coordination point for ATP.

This sequence belongs to the class-II aminoacyl-tRNA synthetase family. EpmA subfamily. As to quaternary structure, homodimer.

It catalyses the reaction D-beta-lysine + L-lysyl-[protein] + ATP = N(6)-((3R)-3,6-diaminohexanoyl)-L-lysyl-[protein] + AMP + diphosphate + H(+). Functionally, with EpmB is involved in the beta-lysylation step of the post-translational modification of translation elongation factor P (EF-P). Catalyzes the ATP-dependent activation of (R)-beta-lysine produced by EpmB, forming a lysyl-adenylate, from which the beta-lysyl moiety is then transferred to the epsilon-amino group of a conserved specific lysine residue in EF-P. This is Elongation factor P--(R)-beta-lysine ligase from Baumannia cicadellinicola subsp. Homalodisca coagulata.